We begin with the raw amino-acid sequence, 203 residues long: Small ribosomal subunit protein uS3 (203 aa).

It belongs to the universal ribosomal protein uS3 family. Part of the 30S ribosomal subunit. Forms a tight complex with proteins S10 and S14.

Its function is as follows. Binds the lower part of the 30S subunit head. Binds mRNA in the 70S ribosome, positioning it for translation. The protein is Small ribosomal subunit protein uS3 of Carsonella ruddii (strain PV).